The following is a 287-amino-acid chain: MADPSASLGLWEACWRDLVLGIVQGLTEFLPISSTAHLKVVPVLLDWGDPGVSVTAAIQLGSIVAVIAYFRRDLAQVMQGISKAFRHGQWREPEARLGIAMAVGTLPILAVGLAIKLFWDEGYETSPLRSVPSIAVVSIVMALLLAVAERMGPRRKQLSDVSGRDGLVVGLAQVLALIPGVSRSGSTLTASLLDGWQRADAARFSFLLGIPAITIAGIVELKDALAATADAGPLPLVIGILAATVVSWLAIDWLLKFLQRHSTWLFVAYRLLFGVGLLAWWSIHGAH.

A run of 6 helical transmembrane segments spans residues 50-70 (PGVSVTAAIQLGSIVAVIAYF), 99-119 (IAMAVGTLPILAVGLAIKLFW), 128-148 (LRSVPSIAVVSIVMALLLAVA), 206-226 (FLLGIPAITIAGIVELKDALA), 231-251 (AGPLPLVIGILAATVVSWLAI), and 263-283 (TWLFVAYRLLFGVGLLAWWSI).

It belongs to the UppP family.

It localises to the cell inner membrane. It catalyses the reaction di-trans,octa-cis-undecaprenyl diphosphate + H2O = di-trans,octa-cis-undecaprenyl phosphate + phosphate + H(+). Functionally, catalyzes the dephosphorylation of undecaprenyl diphosphate (UPP). Confers resistance to bacitracin. This Parasynechococcus marenigrum (strain WH8102) protein is Undecaprenyl-diphosphatase.